The chain runs to 198 residues: Holliday junction branch migration complex subunit RuvA (198 aa).

The segment at 1-63 is domain I; that stretch reads MYDYIKGQLT…EDAHLLFGFH (63 aa). Positions 64–142 are domain II; that stretch reads TEDEKDVFLK…EAPQETGHTK (79 aa). The interval 143 to 147 is flexible linker; it reads ARSNK. The tract at residues 148–198 is domain III; that stretch reads AGNTQLDEAIEALLALGYTATELKKIRAFFEGTSETAEQYIKSALKLLMKG.

The protein belongs to the RuvA family. As to quaternary structure, homotetramer. Forms an RuvA(8)-RuvB(12)-Holliday junction (HJ) complex. HJ DNA is sandwiched between 2 RuvA tetramers; dsDNA enters through RuvA and exits via RuvB. An RuvB hexamer assembles on each DNA strand where it exits the tetramer. Each RuvB hexamer is contacted by two RuvA subunits (via domain III) on 2 adjacent RuvB subunits; this complex drives branch migration. In the full resolvosome a probable DNA-RuvA(4)-RuvB(12)-RuvC(2) complex forms which resolves the HJ.

The protein localises to the cytoplasm. Its function is as follows. The RuvA-RuvB-RuvC complex processes Holliday junction (HJ) DNA during genetic recombination and DNA repair, while the RuvA-RuvB complex plays an important role in the rescue of blocked DNA replication forks via replication fork reversal (RFR). RuvA specifically binds to HJ cruciform DNA, conferring on it an open structure. The RuvB hexamer acts as an ATP-dependent pump, pulling dsDNA into and through the RuvAB complex. HJ branch migration allows RuvC to scan DNA until it finds its consensus sequence, where it cleaves and resolves the cruciform DNA. The chain is Holliday junction branch migration complex subunit RuvA from Streptococcus pyogenes serotype M49 (strain NZ131).